Consider the following 515-residue polypeptide: Vacuolar segregation protein PEP7 (515 aa).

A C2H2-type zinc finger spans residues 6–29 (VSCPICLRKFDNLQALNAHLDVEH). Positions 36–58 (DSLGSNDSRLVNGKQKKARSVDS) are disordered. The segment at 72-137 (KKGKSCCHTC…CCHDCFVTKP (66 aa)) adopts an FYVE-type 1; atypical zinc-finger fold. Zn(2+) is bound by residues cysteine 78, cysteine 81, cysteine 94, cysteine 97, cysteine 102, histidine 105, cysteine 129, cysteine 132, cysteine 221, cysteine 224, cysteine 237, cysteine 240, cysteine 245, cysteine 252, cysteine 289, and cysteine 292. Residues 215–297 (DRSVLFCNIC…LCSHCIDMLF (83 aa)) form an FYVE-type 2 zinc finger.

As to quaternary structure, interacts with VPS21, VPS45, PEP3 and PEP5.

The protein resides in the vacuole membrane. In terms of biological role, required for vacuole segregation and vacuole protein sorting. Possibly part of a complex which tethers the vacuole membrane to microtubules, either directly or via kinesin or dynein-like motor proteins. Probably functions in several interorganelle traffic pathways. The polypeptide is Vacuolar segregation protein PEP7 (PEP7) (Saccharomyces cerevisiae (strain ATCC 204508 / S288c) (Baker's yeast)).